Reading from the N-terminus, the 246-residue chain is Large ribosomal subunit protein uL3 (246 aa).

Gln151 carries the post-translational modification N5-methylglutamine.

The protein belongs to the universal ribosomal protein uL3 family. In terms of assembly, part of the 50S ribosomal subunit. Forms a cluster with proteins L14 and L19. Post-translationally, methylated by PrmB.

In terms of biological role, one of the primary rRNA binding proteins, it binds directly near the 3'-end of the 23S rRNA, where it nucleates assembly of the 50S subunit. The chain is Large ribosomal subunit protein uL3 from Bartonella bacilliformis (strain ATCC 35685 / KC583 / Herrer 020/F12,63).